Consider the following 103-residue polypeptide: Small ribosomal subunit protein uS10 (103 aa).

It belongs to the universal ribosomal protein uS10 family. As to quaternary structure, part of the 30S ribosomal subunit.

Its function is as follows. Involved in the binding of tRNA to the ribosomes. The protein is Small ribosomal subunit protein uS10 of Xylella fastidiosa (strain M12).